We begin with the raw amino-acid sequence, 1630 residues long: Histone transcription regulator 3 homolog (1630 aa).

One copy of the TPR 1 repeat lies at 8–42 (NAASEDLDKEKRTLEIRIEEAVQIYQNALSAQKQG). Positions 325 to 347 (KDIVPPPSDNLPKPQLLKRPIDD) are disordered. The TPR 2 repeat unit spans residues 1230-1263 (WRALYMLGKACRKCGDMENALVHFEAAAALAPTK).

It belongs to the HIR3 family. In terms of assembly, interacts with hip1 and slm9.

Its subcellular location is the nucleus. Has a role in a nucleosome assembly pathway that is required for the integrity of heterochromatin and proper chromosome segregation. Required for transcriptional silencing in the outer repeat (otr) region of centromeric repeats and the Tf2 long terminal repeat retrotransposons. This chain is Histone transcription regulator 3 homolog (hip3), found in Schizosaccharomyces pombe (strain 972 / ATCC 24843) (Fission yeast).